Here is a 411-residue protein sequence, read N- to C-terminus: Phosphopentomutase (411 aa).

Mn(2+) contacts are provided by D14, D306, H311, D347, H348, and H359.

It belongs to the phosphopentomutase family. Mn(2+) serves as cofactor.

It is found in the cytoplasm. The enzyme catalyses 2-deoxy-alpha-D-ribose 1-phosphate = 2-deoxy-D-ribose 5-phosphate. It carries out the reaction alpha-D-ribose 1-phosphate = D-ribose 5-phosphate. It functions in the pathway carbohydrate degradation; 2-deoxy-D-ribose 1-phosphate degradation; D-glyceraldehyde 3-phosphate and acetaldehyde from 2-deoxy-alpha-D-ribose 1-phosphate: step 1/2. Isomerase that catalyzes the conversion of deoxy-ribose 1-phosphate (dRib-1-P) and ribose 1-phosphate (Rib-1-P) to deoxy-ribose 5-phosphate (dRib-5-P) and ribose 5-phosphate (Rib-5-P), respectively. This is Phosphopentomutase from Lactococcus lactis subsp. cremoris (strain SK11).